A 302-amino-acid polypeptide reads, in one-letter code: Recombination-associated protein RdgC (302 aa).

The protein belongs to the RdgC family.

It is found in the cytoplasm. It localises to the nucleoid. In terms of biological role, may be involved in recombination. This is Recombination-associated protein RdgC from Actinobacillus pleuropneumoniae serotype 7 (strain AP76).